The sequence spans 1083 residues: DNA-directed RNA polymerase subunit beta (1083 aa).

The protein belongs to the RNA polymerase beta chain family. In plastids the minimal PEP RNA polymerase catalytic core is composed of four subunits: alpha, beta, beta', and beta''. When a (nuclear-encoded) sigma factor is associated with the core the holoenzyme is formed, which can initiate transcription.

Its subcellular location is the plastid. The protein localises to the chloroplast. The enzyme catalyses RNA(n) + a ribonucleoside 5'-triphosphate = RNA(n+1) + diphosphate. DNA-dependent RNA polymerase catalyzes the transcription of DNA into RNA using the four ribonucleoside triphosphates as substrates. The chain is DNA-directed RNA polymerase subunit beta from Acorus calamus var. americanus (American sweet flag).